The chain runs to 409 residues: Arginine deiminase (409 aa).

C399 functions as the Amidino-cysteine intermediate in the catalytic mechanism.

Belongs to the arginine deiminase family.

Its subcellular location is the cytoplasm. The enzyme catalyses L-arginine + H2O = L-citrulline + NH4(+). It functions in the pathway amino-acid degradation; L-arginine degradation via ADI pathway; carbamoyl phosphate from L-arginine: step 1/2. This chain is Arginine deiminase, found in Streptococcus pneumoniae serotype 19F (strain G54).